A 125-amino-acid chain; its full sequence is GEEVAVKLESQKARHPQLLYESKLYKILQGGVGIPHIRWYGQEKDYNVLVMDLLGPSLEDLFNFCSRRFTMKTVLMLADQMISRIEYVHTKNFIHRDIKPDNFLMGIGRHCNKLFLIDFGLAKKY.

The region spanning 1–125 (GEEVAVKLES…LIDFGLAKKY (125 aa)) is the Protein kinase domain. Lys-7 is a binding site for ATP. Asp-97 acts as the Proton acceptor in catalysis.

Belongs to the protein kinase superfamily. CK1 Ser/Thr protein kinase family. Casein kinase I subfamily. Interacts with the Axin complex. Interacts with TUT1, leading to TUT1 phosphorylation. Interacts with FAM83A, FAM83B, FAM83C, FAM83D, FAM83E, FAM83F, FAM83G and FAM83H (via DUF1669). Interaction with FAM83H recruits CSNK1A1 to keratin filaments. Post-translationally, phosphorylated by MTOR in response to mitogenic stimulation, leading to its activation.

The protein localises to the cytoplasm. It localises to the cytoskeleton. The protein resides in the microtubule organizing center. It is found in the centrosome. Its subcellular location is the chromosome. The protein localises to the centromere. It localises to the kinetochore. The protein resides in the nucleus speckle. It is found in the cilium basal body. Its subcellular location is the spindle. The enzyme catalyses L-seryl-[protein] + ATP = O-phospho-L-seryl-[protein] + ADP + H(+). It carries out the reaction L-threonyl-[protein] + ATP = O-phospho-L-threonyl-[protein] + ADP + H(+). Functionally, casein kinases are operationally defined by their preferential utilization of acidic proteins such as caseins as substrates. It can phosphorylate a large number of proteins. Participates in Wnt signaling. Phosphorylates CTNNB1 at 'Ser-45'. May phosphorylate PER1 and PER2. May play a role in segregating chromosomes during mitosis. May play a role in keratin cytoskeleton disassembly and thereby, it may regulate epithelial cell migration. Acts as a positive regulator of mTORC1 and mTORC2 signaling in response to nutrients by mediating phosphorylation of DEPTOR inhibitor. Acts as an inhibitor of NLRP3 inflammasome assembly by mediating phosphorylation of NLRP3. This chain is Casein kinase I isoform alpha (CSNK1A1), found in Sus scrofa (Pig).